The chain runs to 415 residues: Serine hydroxymethyltransferase (415 aa).

(6S)-5,6,7,8-tetrahydrofolate contacts are provided by residues Leu-117 and 121–123 (GHL). Residue Lys-226 is modified to N6-(pyridoxal phosphate)lysine.

This sequence belongs to the SHMT family. As to quaternary structure, homodimer. It depends on pyridoxal 5'-phosphate as a cofactor.

It localises to the cytoplasm. It carries out the reaction (6R)-5,10-methylene-5,6,7,8-tetrahydrofolate + glycine + H2O = (6S)-5,6,7,8-tetrahydrofolate + L-serine. It functions in the pathway one-carbon metabolism; tetrahydrofolate interconversion. It participates in amino-acid biosynthesis; glycine biosynthesis; glycine from L-serine: step 1/1. Its function is as follows. Catalyzes the reversible interconversion of serine and glycine with tetrahydrofolate (THF) serving as the one-carbon carrier. This reaction serves as the major source of one-carbon groups required for the biosynthesis of purines, thymidylate, methionine, and other important biomolecules. Also exhibits THF-independent aldolase activity toward beta-hydroxyamino acids, producing glycine and aldehydes, via a retro-aldol mechanism. The chain is Serine hydroxymethyltransferase from Dehalococcoides mccartyi (strain ATCC BAA-2100 / JCM 16839 / KCTC 5957 / BAV1).